Here is a 429-residue protein sequence, read N- to C-terminus: Ribosomal RNA small subunit methyltransferase B (429 aa).

Residues 254–260 (CAAPGGK), Asp277, Asp303, and Asp322 contribute to the S-adenosyl-L-methionine site. Cys375 serves as the catalytic Nucleophile. The disordered stretch occupies residues 397-419 (ALSETGTPDQPGQQNLPGGEEGD). Residues 400 to 412 (ETGTPDQPGQQNL) are compositionally biased toward polar residues.

The protein belongs to the class I-like SAM-binding methyltransferase superfamily. RsmB/NOP family.

Its subcellular location is the cytoplasm. The catalysed reaction is cytidine(967) in 16S rRNA + S-adenosyl-L-methionine = 5-methylcytidine(967) in 16S rRNA + S-adenosyl-L-homocysteine + H(+). Its function is as follows. Specifically methylates the cytosine at position 967 (m5C967) of 16S rRNA. The chain is Ribosomal RNA small subunit methyltransferase B from Salmonella typhi.